A 721-amino-acid chain; its full sequence is Polyribonucleotide nucleotidyltransferase (721 aa).

Residues Asp495 and Asp501 each coordinate Mg(2+). The KH domain maps to 562–621 (PRLLSFRIDPELIGTVIGPGGRTIKGITERTNTKIDIEDGGIVTIASHDGAAAEEAQKII). One can recognise an S1 motif domain in the interval 631-699 (GEIFPGVVTR…SRGRINLTLR (69 aa)). A disordered region spans residues 702–721 (GQNGGMSYPEPTPTPVAPLS). The segment covering 711–721 (EPTPTPVAPLS) has biased composition (pro residues).

The protein belongs to the polyribonucleotide nucleotidyltransferase family. The cofactor is Mg(2+).

The protein localises to the cytoplasm. The enzyme catalyses RNA(n+1) + phosphate = RNA(n) + a ribonucleoside 5'-diphosphate. Involved in mRNA degradation. Catalyzes the phosphorolysis of single-stranded polyribonucleotides processively in the 3'- to 5'-direction. This Prochlorococcus marinus (strain MIT 9301) protein is Polyribonucleotide nucleotidyltransferase.